The primary structure comprises 174 residues: Crossover junction endodeoxyribonuclease RuvC (174 aa).

Residues Asp8, Glu69, and Asp141 contribute to the active site. Residues Asp8, Glu69, and Asp141 each coordinate Mg(2+).

This sequence belongs to the RuvC family. Homodimer which binds Holliday junction (HJ) DNA. The HJ becomes 2-fold symmetrical on binding to RuvC with unstacked arms; it has a different conformation from HJ DNA in complex with RuvA. In the full resolvosome a probable DNA-RuvA(4)-RuvB(12)-RuvC(2) complex forms which resolves the HJ. The cofactor is Mg(2+).

The protein localises to the cytoplasm. The catalysed reaction is Endonucleolytic cleavage at a junction such as a reciprocal single-stranded crossover between two homologous DNA duplexes (Holliday junction).. Functionally, the RuvA-RuvB-RuvC complex processes Holliday junction (HJ) DNA during genetic recombination and DNA repair. Endonuclease that resolves HJ intermediates. Cleaves cruciform DNA by making single-stranded nicks across the HJ at symmetrical positions within the homologous arms, yielding a 5'-phosphate and a 3'-hydroxyl group; requires a central core of homology in the junction. The consensus cleavage sequence is 5'-(A/T)TT(C/G)-3'. Cleavage occurs on the 3'-side of the TT dinucleotide at the point of strand exchange. HJ branch migration catalyzed by RuvA-RuvB allows RuvC to scan DNA until it finds its consensus sequence, where it cleaves and resolves the cruciform DNA. This chain is Crossover junction endodeoxyribonuclease RuvC, found in Xanthomonas oryzae pv. oryzae (strain MAFF 311018).